The following is a 155-amino-acid chain: Transcriptional repressor NrdR (155 aa).

Residues 3-34 (CPFCNQTDTKVIDSRLVADGVQVRRRRECQAC) fold into a zinc finger. The ATP-cone domain occupies 49–139 (PKVIKQDGTR…VYRSFQDISE (91 aa)).

This sequence belongs to the NrdR family. Requires Zn(2+) as cofactor.

Negatively regulates transcription of bacterial ribonucleotide reductase nrd genes and operons by binding to NrdR-boxes. This Teredinibacter turnerae (strain ATCC 39867 / T7901) protein is Transcriptional repressor NrdR.